Reading from the N-terminus, the 245-residue chain is MGGQKTHFGFSTVNEDEKAGKVAEVFHSVAKNYDIMNDVMSAGLHRVWKHFTINTAHLKKGDKVLDIAGGTGDLSRGWAKRVGKEGEVWLTDINSSMLTVGRDRLLNEGMILPVSLADAEKLPFPDNYFNLVSVAFGLRNMTHKDAALKEMYRVLKPGGTLLVLEFSKIYKPLEGAYDFYSFKLLPAMGRLIAKDAESYQYLAESIRMHPDQETLKQMMLDAGFDSVDYHNMSAGIVALHKGVKF.

Residues threonine 71, aspartate 92, and 118–119 (DA) contribute to the S-adenosyl-L-methionine site.

The protein belongs to the class I-like SAM-binding methyltransferase superfamily. MenG/UbiE family.

The enzyme catalyses a 2-demethylmenaquinol + S-adenosyl-L-methionine = a menaquinol + S-adenosyl-L-homocysteine + H(+). It catalyses the reaction a 2-methoxy-6-(all-trans-polyprenyl)benzene-1,4-diol + S-adenosyl-L-methionine = a 5-methoxy-2-methyl-3-(all-trans-polyprenyl)benzene-1,4-diol + S-adenosyl-L-homocysteine + H(+). It participates in quinol/quinone metabolism; menaquinone biosynthesis; menaquinol from 1,4-dihydroxy-2-naphthoate: step 2/2. Its pathway is cofactor biosynthesis; ubiquinone biosynthesis. Functionally, methyltransferase required for the conversion of demethylmenaquinol (DMKH2) to menaquinol (MKH2) and the conversion of 2-polyprenyl-6-methoxy-1,4-benzoquinol (DDMQH2) to 2-polyprenyl-3-methyl-6-methoxy-1,4-benzoquinol (DMQH2). This Neisseria meningitidis serogroup A / serotype 4A (strain DSM 15465 / Z2491) protein is Ubiquinone/menaquinone biosynthesis C-methyltransferase UbiE.